The chain runs to 370 residues: 2-aminoethylphosphonate--pyruvate transaminase 2 (370 aa).

N6-(pyridoxal phosphate)lysine is present on lysine 194.

Belongs to the class-V pyridoxal-phosphate-dependent aminotransferase family. PhnW subfamily. In terms of assembly, homodimer. The cofactor is pyridoxal 5'-phosphate.

The catalysed reaction is (2-aminoethyl)phosphonate + pyruvate = phosphonoacetaldehyde + L-alanine. Involved in phosphonate degradation. The protein is 2-aminoethylphosphonate--pyruvate transaminase 2 of Paraburkholderia xenovorans (strain LB400).